Reading from the N-terminus, the 341-residue chain is MTERFVTPDFSSEEDRLEASLRPRVLTEYIGQSKAKGNLQVFIDAARGRQESLDHVLFYGPPGLGKTTLANIVASEMGVSIKSTSGPVIEKPGDLAAILTNLSDGDVLFIDEIHRLSPVVEEILYPAMEDYQLDIIIGQGPSARTIKLDIPRFTLVGATTRAGLLSSPLRDRFGVICRLEFYTDDELATIAGRSARILDIPIEKDGQYEIARRSRGTPRIANRLLRRVRDFAQVKGDGIITRDIADMALSRLEVDNCGLDHMDRLLLLAIIDKFAGGPVGLETLAAAVGEEKDTIEDVIEPYLLQNGFLNRTPRGRTATERAYRHFQRQIPRGKTSGELFS.

Residues 1-182 (MTERFVTPDF…FGVICRLEFY (182 aa)) form a large ATPase domain (RuvB-L) region. ATP-binding positions include L21, R22, G63, K66, T67, T68, 129–131 (EDY), R172, Y182, and R219. Mg(2+) is bound at residue T67. Residues 183 to 253 (TDDELATIAG…IADMALSRLE (71 aa)) form a small ATPAse domain (RuvB-S) region. The segment at 256 to 341 (NCGLDHMDRL…RGKTSGELFS (86 aa)) is head domain (RuvB-H). Residues R311 and R316 each contribute to the DNA site.

The protein belongs to the RuvB family. In terms of assembly, homohexamer. Forms an RuvA(8)-RuvB(12)-Holliday junction (HJ) complex. HJ DNA is sandwiched between 2 RuvA tetramers; dsDNA enters through RuvA and exits via RuvB. An RuvB hexamer assembles on each DNA strand where it exits the tetramer. Each RuvB hexamer is contacted by two RuvA subunits (via domain III) on 2 adjacent RuvB subunits; this complex drives branch migration. In the full resolvosome a probable DNA-RuvA(4)-RuvB(12)-RuvC(2) complex forms which resolves the HJ.

The protein localises to the cytoplasm. The catalysed reaction is ATP + H2O = ADP + phosphate + H(+). Functionally, the RuvA-RuvB-RuvC complex processes Holliday junction (HJ) DNA during genetic recombination and DNA repair, while the RuvA-RuvB complex plays an important role in the rescue of blocked DNA replication forks via replication fork reversal (RFR). RuvA specifically binds to HJ cruciform DNA, conferring on it an open structure. The RuvB hexamer acts as an ATP-dependent pump, pulling dsDNA into and through the RuvAB complex. RuvB forms 2 homohexamers on either side of HJ DNA bound by 1 or 2 RuvA tetramers; 4 subunits per hexamer contact DNA at a time. Coordinated motions by a converter formed by DNA-disengaged RuvB subunits stimulates ATP hydrolysis and nucleotide exchange. Immobilization of the converter enables RuvB to convert the ATP-contained energy into a lever motion, pulling 2 nucleotides of DNA out of the RuvA tetramer per ATP hydrolyzed, thus driving DNA branch migration. The RuvB motors rotate together with the DNA substrate, which together with the progressing nucleotide cycle form the mechanistic basis for DNA recombination by continuous HJ branch migration. Branch migration allows RuvC to scan DNA until it finds its consensus sequence, where it cleaves and resolves cruciform DNA. The sequence is that of Holliday junction branch migration complex subunit RuvB from Syntrophotalea carbinolica (strain DSM 2380 / NBRC 103641 / GraBd1) (Pelobacter carbinolicus).